The following is a 315-amino-acid chain: L-lactate dehydrogenase (315 aa).

NAD(+)-binding positions include valine 17, aspartate 38, lysine 43, tyrosine 69, and 83–84 (GA). Substrate-binding positions include glutamine 86, arginine 92, and 124–127 (NPVD). Residues 122–124 (ATN) and serine 147 each bind NAD(+). 152–155 (DTAR) is a binding site for substrate. Residues arginine 157 and histidine 172 each contribute to the beta-D-fructose 1,6-bisphosphate site. Residue histidine 179 is the Proton acceptor of the active site. Position 224 is a phosphotyrosine (tyrosine 224). Residue threonine 233 coordinates substrate.

The protein belongs to the LDH/MDH superfamily. LDH family. As to quaternary structure, homotetramer.

The protein localises to the cytoplasm. The catalysed reaction is (S)-lactate + NAD(+) = pyruvate + NADH + H(+). The protein operates within fermentation; pyruvate fermentation to lactate; (S)-lactate from pyruvate: step 1/1. Allosterically activated by fructose 1,6-bisphosphate (FBP). Its function is as follows. Catalyzes the conversion of lactate to pyruvate. The sequence is that of L-lactate dehydrogenase from Bacillus pumilus (strain SAFR-032).